Here is a 355-residue protein sequence, read N- to C-terminus: Peptide chain release factor 1 (355 aa).

Glutamine 231 carries the N5-methylglutamine modification.

Belongs to the prokaryotic/mitochondrial release factor family. Post-translationally, methylated by PrmC. Methylation increases the termination efficiency of RF1.

The protein resides in the cytoplasm. Functionally, peptide chain release factor 1 directs the termination of translation in response to the peptide chain termination codons UAG and UAA. This Nautilia profundicola (strain ATCC BAA-1463 / DSM 18972 / AmH) protein is Peptide chain release factor 1.